Reading from the N-terminus, the 268-residue chain is Protein limb expression 1 homolog (268 aa).

This sequence belongs to the LIX1 family. Interacts with ft (via intracellular domain) and ds (via intracellular domain).

It is found in the apical cell membrane. The protein resides in the cytoplasm. Its function is as follows. Component of the Fat (ft) signaling pathway that functions in normal development of various organs such as the wing and leg. In developing imaginal disks, involved in regulating both the protein levels and apical localization of ft and ds. Involved in establishing planar cell polarity (PCP) along the anterior-posterior axis of the wing (the early Fz signaling event), probably by acting upstream of ds and ft to regulate Fz activity. The sequence is that of Protein limb expression 1 homolog from Drosophila melanogaster (Fruit fly).